Here is a 433-residue protein sequence, read N- to C-terminus: Lipase 2 (433 aa).

The Involved in the stabilization of the negatively charged intermediate by the formation of the oxyanion hole motif lies at His-165–Gly-167. Ser-239 (charge relay system) is an active-site residue. Active-site residues include Asp-361 and His-391.

This sequence belongs to the 'GDXG' lipolytic enzyme family.

It carries out the reaction a triacylglycerol + H2O = a diacylglycerol + a fatty acid + H(+). This is Lipase 2 (lip2) from Moraxella sp. (strain TA144).